The sequence spans 306 residues: Galactosylgalactosylxylosylprotein 3-beta-glucuronosyltransferase I (306 aa).

At 1-11 the chain is on the cytoplasmic side; it reads MSEVRIRPRQV. Residues 12 to 29 traverse the membrane as a helical; Signal-anchor for type II membrane protein segment; that stretch reads LILIIVFLVVLMMVHRNG. At 30–306 the chain is on the lumenal side; that stretch reads KRTCQGPEYL…GQRSDGGMEV (277 aa). N-linked (GlcNAc...) asparagine glycosylation occurs at Asn90. A Mn(2+)-binding site is contributed by Asp163. Catalysis depends on Glu252, which acts as the Proton acceptor.

It belongs to the glycosyltransferase 43 family. Mn(2+) is required as a cofactor.

Its subcellular location is the golgi apparatus membrane. The enzyme catalyses 3-O-(beta-D-galactosyl-(1-&gt;3)-beta-D-galactosyl-(1-&gt;4)-beta-D-xylosyl)-L-seryl-[protein] + UDP-alpha-D-glucuronate = 3-O-(beta-D-GlcA-(1-&gt;3)-beta-D-Gal-(1-&gt;3)-beta-D-Gal-(1-&gt;4)-beta-D-Xyl)-L-seryl-[protein] + UDP + H(+). It participates in protein modification; protein glycosylation. Its function is as follows. Involved in the biosynthesis of L2/HNK-1 carbohydrate epitope on both glycolipids and glycoproteins. Shows strict specificity for Gal-beta-1,3-Gal-beta-1,4-Xyl, exhibiting negligible incorporation into other galactoside substrates. This Drosophila melanogaster (Fruit fly) protein is Galactosylgalactosylxylosylprotein 3-beta-glucuronosyltransferase I (GlcAT-I).